Reading from the N-terminus, the 419-residue chain is Phosphoglycerate kinase (419 aa).

Substrate-binding positions include 21–23 (DFN), arginine 36, 60–63 (HLGD), arginine 137, and arginine 174. Residues lysine 225, glycine 316, glutamate 347, and 376-379 (GGDS) contribute to the ATP site.

This sequence belongs to the phosphoglycerate kinase family. Monomer.

Its subcellular location is the cytoplasm. It carries out the reaction (2R)-3-phosphoglycerate + ATP = (2R)-3-phospho-glyceroyl phosphate + ADP. It functions in the pathway carbohydrate degradation; glycolysis; pyruvate from D-glyceraldehyde 3-phosphate: step 2/5. The chain is Phosphoglycerate kinase (pgk) from Treponema pallidum (strain Nichols).